The primary structure comprises 308 residues: S-crystallin SL18 (308 aa).

The region spanning 2-80 (PKYTLYYFNS…YLARQFGFYG (79 aa)) is the GST N-terminal domain. Residues 165-205 (EMRSQDSMVEPPSQKLSPELESQSSLCSERPQCGPPDPMMG) form a disordered region. The span at 178 to 191 (QKLSPELESQSSLC) shows a compositional bias: polar residues. Positions 185-308 (ESQSSLCSER…YFTLRNYTDF (124 aa)) constitute a GST C-terminal domain.

Belongs to the GST superfamily. In terms of tissue distribution, lens.

S-crystallins are structural components of squids and octopi eye lens. Contains relatively little if any GST activity. This Nototodarus sloanii (Wellington flying squid) protein is S-crystallin SL18.